We begin with the raw amino-acid sequence, 422 residues long: Carboxypeptidase B2 (422 aa).

A signal peptide spans 1-21 (MKLYGLGVLVAIILYEKHGLA). Positions 22-113 (FQSGHVLSAL…QTSNDTVSPR (92 aa)) are cleaved as a propeptide — activation peptide. N-linked (GlcNAc...) asparagine glycans are attached at residues N43, N72, N84, and N107. Residues 121-418 (QYHSLNEIYS…AAVSKIAWHV (298 aa)) form the Peptidase M14 domain. A disulfide bridge connects residues C177 and C190. Zn(2+) is bound by residues H180 and E183. Substrate is bound by residues 180-183 (HARE) and R238. The N-linked (GlcNAc...) asparagine glycan is linked to N240. Intrachain disulfides connect C249-C273 and C264-C278. 255-256 (NR) provides a ligand contact to substrate. Zn(2+) is bound at residue H309. 310–311 (SY) contributes to the substrate binding site. N-linked (GlcNAc...) asparagine glycosylation is present at N322. Y362 contacts substrate. The Proton donor/acceptor role is filled by E384.

The protein belongs to the peptidase M14 family. The cofactor is Zn(2+). As to expression, plasma; synthesized in the liver.

It localises to the secreted. The enzyme catalyses Release of C-terminal Arg and Lys from a polypeptide.. TAFI/CPB2 is unique among carboxypeptidases in that it spontaneously inactivates with a short half-life, a property that is crucial for its role in controlling blood clot lysis. The zymogen is stabilized by interactions with the activation peptide. Release of the activation peptide increases a dynamic flap mobility and in time this leads to conformational changes that disrupt the catalytic site and expose a cryptic thrombin-cleavage site present at Arg-323. Its function is as follows. Cleaves C-terminal arginine or lysine residues from biologically active peptides such as kinins or anaphylatoxins in the circulation thereby regulating their activities. Down-regulates fibrinolysis by removing C-terminal lysine residues from fibrin that has already been partially degraded by plasmin. This Rattus norvegicus (Rat) protein is Carboxypeptidase B2 (Cpb2).